A 167-amino-acid chain; its full sequence is uncharacterized protein (167 aa).

A helical transmembrane segment spans residues 4–24 (IIGLFFIIILIVINISILAYD).

Its subcellular location is the membrane. This is an uncharacterized protein from Rickettsia prowazekii (strain Madrid E).